A 109-amino-acid polypeptide reads, in one-letter code: Large ribosomal subunit protein uL22 (109 aa).

It belongs to the universal ribosomal protein uL22 family. Part of the 50S ribosomal subunit.

This protein binds specifically to 23S rRNA; its binding is stimulated by other ribosomal proteins, e.g. L4, L17, and L20. It is important during the early stages of 50S assembly. It makes multiple contacts with different domains of the 23S rRNA in the assembled 50S subunit and ribosome. Its function is as follows. The globular domain of the protein is located near the polypeptide exit tunnel on the outside of the subunit, while an extended beta-hairpin is found that lines the wall of the exit tunnel in the center of the 70S ribosome. This chain is Large ribosomal subunit protein uL22, found in Methylibium petroleiphilum (strain ATCC BAA-1232 / LMG 22953 / PM1).